The primary structure comprises 781 residues: Protein argonaute (781 aa).

One can recognise a PAZ domain in the interval 110-194 (SMNELLTERR…RHNDYCNSVM (85 aa)). A Piwi domain is found at 436–760 (LVVIVIPGPK…LSKFCGEVLR (325 aa)).

Belongs to the argonaute family. Ago subfamily. In terms of assembly, interacts with miR2. Highly specific binding to the mRNA m7G-cap. May be a component of the RNA-induced silencing complex (RISC), a sequence-specific, multicomponent nuclease that destroys or silences messenger RNAs homologous to the silencing trigger.

Its subcellular location is the cytoplasm. Its function is as follows. Plays an essential role in growth and, with Dicer, also involved in microRNA (miRNA)-mediated translational repression. The RNA interference pathway is implicated in antigenic variation having a role in regulation of variant-specific surface protein (VSP)-coding gene expression. Several VSP genes are transcribed but only transcripts encoding the VSP to be expressed accumulate. Antisense RNAs corresponding to the silenced VSP genes are detected. This chain is Protein argonaute, found in Giardia intestinalis (Giardia lamblia).